The chain runs to 88 residues: Small ribosomal subunit protein uS15c (88 aa).

The protein belongs to the universal ribosomal protein uS15 family. In terms of assembly, part of the 30S ribosomal subunit.

It localises to the plastid. The protein localises to the chloroplast. This Lobularia maritima (Sweet alyssum) protein is Small ribosomal subunit protein uS15c (rps15).